The primary structure comprises 158 residues: Large ribosomal subunit protein uL11 (158 aa).

This sequence belongs to the universal ribosomal protein uL11 family. In terms of assembly, part of the ribosomal stalk of the 50S ribosomal subunit. Interacts with L10 and the large rRNA to form the base of the stalk. L10 forms an elongated spine to which L12 dimers bind in a sequential fashion forming a multimeric L10(L12)X complex.

Forms part of the ribosomal stalk which helps the ribosome interact with GTP-bound translation factors. This is Large ribosomal subunit protein uL11 from Methanoculleus marisnigri (strain ATCC 35101 / DSM 1498 / JR1).